The following is a 421-amino-acid chain: D-amino acid dehydrogenase (421 aa).

3-17 is a binding site for FAD; that stretch reads VLILGSGVIGVTSAY.

This sequence belongs to the DadA oxidoreductase family. FAD is required as a cofactor.

It catalyses the reaction a D-alpha-amino acid + A + H2O = a 2-oxocarboxylate + AH2 + NH4(+). In terms of biological role, oxidative deamination of D-amino acids. This Bradyrhizobium diazoefficiens (strain JCM 10833 / BCRC 13528 / IAM 13628 / NBRC 14792 / USDA 110) protein is D-amino acid dehydrogenase.